A 356-amino-acid chain; its full sequence is PEP-dependent dihydroxyacetone kinase, dihydroxyacetone-binding subunit DhaK (356 aa).

The region spanning 7 to 352 is the DhaK domain; it reads DVQDVLDEQL…WDAPVHTPAL (346 aa). Residues 53–56, K104, and D109 each bind dihydroxyacetone; that span reads GSGH. The active-site Proton acceptor is the H56. Catalysis depends on H218, which acts as the Tele-hemiaminal-histidine intermediate.

Homodimer. The dihydroxyacetone kinase complex is composed of a homodimer of DhaM, a homodimer of DhaK and the subunit DhaL. DhaL also forms a complex with DhaR.

The enzyme catalyses dihydroxyacetone + phosphoenolpyruvate = dihydroxyacetone phosphate + pyruvate. The protein operates within polyol metabolism; glycerol degradation. With respect to regulation, inhibited by chloro-3-hydroxyacetone and D,L-glyceraldehyde. Dihydroxyacetone binding subunit of the dihydroxyacetone kinase, which is responsible for the phosphoenolpyruvate (PEP)-dependent phosphorylation of dihydroxyacetone via a phosphoryl group transfer from DhaL-ATP. Binds covalently dihydroxyacetone in hemiaminal linkage. DhaK also acts as corepressor of the transcription activator DhaR by binding to the sensor domain of DhaR. In the presence of dihydroxyacetone, DhaL-ADP displaces DhaK and stimulates DhaR activity. In the absence of dihydroxyacetone, DhaL-ADP is converted by the PTS to DhaL-ATP, which does not bind to DhaR. This chain is PEP-dependent dihydroxyacetone kinase, dihydroxyacetone-binding subunit DhaK, found in Escherichia coli (strain K12).